The primary structure comprises 118 residues: Hydrogenase maturation factor HypA (118 aa).

Histidine 2 lines the Ni(2+) pocket. Zn(2+)-binding residues include cysteine 74, cysteine 77, cysteine 91, and cysteine 94.

It belongs to the HypA/HybF family.

Its function is as follows. Involved in the maturation of [NiFe] hydrogenases. Required for nickel insertion into the metal center of the hydrogenase. The sequence is that of Hydrogenase maturation factor HypA from Helicobacter hepaticus (strain ATCC 51449 / 3B1).